A 787-amino-acid polypeptide reads, in one-letter code: Vacuolar protein sorting-associated protein 35A (787 aa).

Methionine 1 bears the N-acetylmethionine mark.

The protein belongs to the VPS35 family. As to quaternary structure, component of the retromer complex which consists of VPS29 (MAG1), VPS26 (VPS26A or VPS26B), VPS35 (VPS35A or VPS35B or VPS35C), VPS5/17 (SNX1 or SNX2A or SNX2B). Component of a retromer subcomplex consisting of VPS29 (MAG1), VPS26 (VPS26A or VPS26B), VPS35 (VPS35A or VPS35B or VPS35C). Interacts with RABG3F.

It localises to the cytoplasm. Its subcellular location is the endosome membrane. The protein localises to the prevacuolar compartment membrane. The protein resides in the golgi apparatus. It is found in the trans-Golgi network membrane. Plays a role in vesicular protein sorting. Component of the membrane-associated retromer complex which is essential in endosome-to-Golgi retrograde transport. Also involved in the efficient sorting of seed storage proteins. Binds alone to endosomal membranes and is required for recruitment of VPS26 and VPS29 to membrane. The VPS29-VPS26-VPS35 subcomplex may be involved in recycling of specific cargos from endosome to the plasma membrane. The polypeptide is Vacuolar protein sorting-associated protein 35A (VPS35A) (Arabidopsis thaliana (Mouse-ear cress)).